We begin with the raw amino-acid sequence, 163 residues long: Putative H/ACA ribonucleoprotein complex subunit 2-like protein (163 aa).

Residues 1-27 (MGKRNLDETMNESTVSEANGDATAPTT) form a disordered region.

Belongs to the eukaryotic ribosomal protein eL8 family. Component of the small nucleolar ribonucleoprotein particle containing H/ACA-type snoRNAs (H/ACA snoRNPs).

Its subcellular location is the nucleus. The protein localises to the nucleolus. In terms of biological role, required for ribosome biogenesis. Part of a complex which catalyzes pseudouridylation of rRNA. This involves the isomerization of uridine such that the ribose is subsequently attached to C5, instead of the normal N1. Pseudouridine ('psi') residues may serve to stabilize the conformation of rRNAs. This chain is Putative H/ACA ribonucleoprotein complex subunit 2-like protein, found in Caenorhabditis elegans.